Here is a 375-residue protein sequence, read N- to C-terminus: Succinyl-diaminopimelate desuccinylase (375 aa).

A Zn(2+)-binding site is contributed by His66. Residue Asp68 is part of the active site. Residue Asp99 participates in Zn(2+) binding. The active-site Proton acceptor is the Glu133. Zn(2+)-binding residues include Glu134, Glu162, and His348.

The protein belongs to the peptidase M20A family. DapE subfamily. In terms of assembly, homodimer. The cofactor is Zn(2+). It depends on Co(2+) as a cofactor.

The catalysed reaction is N-succinyl-(2S,6S)-2,6-diaminopimelate + H2O = (2S,6S)-2,6-diaminopimelate + succinate. Its pathway is amino-acid biosynthesis; L-lysine biosynthesis via DAP pathway; LL-2,6-diaminopimelate from (S)-tetrahydrodipicolinate (succinylase route): step 3/3. Functionally, catalyzes the hydrolysis of N-succinyl-L,L-diaminopimelic acid (SDAP), forming succinate and LL-2,6-diaminopimelate (DAP), an intermediate involved in the bacterial biosynthesis of lysine and meso-diaminopimelic acid, an essential component of bacterial cell walls. The protein is Succinyl-diaminopimelate desuccinylase of Escherichia coli O157:H7.